Consider the following 51-residue polypeptide: Micropeptide inhibiting actin cytoskeleton (51 aa).

Positions methionine 1 to serine 22 are disordered.

As to quaternary structure, interacts with aquaporin AQP2.

In terms of biological role, reduces filamentous actin fibers by interacting with aquaporin AQP2 which leads to inhibition of the expression of SEPTIN4 and integrin ITGB4. Also inhibits the activation of the EREG/EGFR signaling pathway through interaction with AQP2. In Homo sapiens (Human), this protein is Micropeptide inhibiting actin cytoskeleton.